The primary structure comprises 62 residues: Photosystem II reaction center protein Z (62 aa).

2 consecutive transmembrane segments (helical) span residues 8 to 28 (AVFASIAIPFIPVIGVPAVFA) and 41 to 61 (FSGATPRIGPVPLVGILNSSV).

This sequence belongs to the PsbZ family. As to quaternary structure, PSII is composed of 1 copy each of membrane proteins PsbA, PsbB, PsbC, PsbD, PsbE, PsbF, PsbH, PsbI, PsbJ, PsbK, PsbL, PsbM, PsbT, PsbY, PsbZ, Psb30/Ycf12, at least 3 peripheral proteins of the oxygen-evolving complex and a large number of cofactors. It forms dimeric complexes.

Its subcellular location is the plastid. It is found in the chloroplast thylakoid membrane. Functionally, may control the interaction of photosystem II (PSII) cores with the light-harvesting antenna, regulates electron flow through the 2 photosystem reaction centers. PSII is a light-driven water plastoquinone oxidoreductase, using light energy to abstract electrons from H(2)O, generating a proton gradient subsequently used for ATP formation. The chain is Photosystem II reaction center protein Z from Selaginella uncinata (Blue spike-moss).